Reading from the N-terminus, the 216-residue chain is Twisted gastrulation protein homolog 1-A (216 aa).

The first 25 residues, 1–25, serve as a signal peptide directing secretion; sequence MKPSFLHIPAAALLLCSLWILPIYC. 3 N-linked (GlcNAc...) asparagine glycosylation sites follow: asparagine 52, asparagine 81, and asparagine 145.

This sequence belongs to the twisted gastrulation protein family. As to quaternary structure, binds directly to bmp2, bmp4 and bmp7 and can form a ternary complex with bmps and chordin, thus preventing the binding of bmps to their cell surface receptors. In terms of tissue distribution, posterior defects are induced by overexpression. This may arise through alteration of bmp4 or chrd function in the developing tailbud region.

The protein resides in the secreted. In terms of biological role, involved in dorsal-ventral patterning, permitting peak BMP signaling by antagonizing the residual anti-BMP activity of the cleavage products of chrd. Functions to promote the formation of ventral mesoderm by increasing the activity of bmp7 and other BMPS. Seems to antagonize BMP signaling by forming ternary complexes with chrd and BMPs, thereby preventing BMPs from binding to their receptors. In addition to the anti-BMP function, also has pro-BMP activity, partly mediated by cleavage and degradation of chrd, which releases BMPs from ternary complexes. May be an important modulator of BMP-regulated cartilage development and chondrocyte differentiation. This chain is Twisted gastrulation protein homolog 1-A (twsg1-a), found in Xenopus laevis (African clawed frog).